Consider the following 548-residue polypeptide: MSEQKTSGSGSAAAARLQIEAEYKDKGPQWHRFYKEICETCDREAKEKQFSTSESERHTNRGLNRYRDVNPYDHSRIVLKRGSVDYINANLVQLERAERQYILTQGPLVDTVGHFWLMVWEQKSRAVLMLNKLMEKKQIKCHLYWPNEMGADKALKLPHVKLTVELVRLETYQNFVRRWFKLTDLETQQSREVMQFHYTTWPDFGIPSSPNAFLKFLQQVRDSGCLSRDVGPAVVHCSAGIGRSGTFCLVDCCLVLIDKYGECNVSKVLCELRSYRMGLIQTADQLDFSYQAIIEGIKKLHDPTFLDAEEPLISNDTETHTLDELPPPLPPRVQSLNLPLAPNSGGILSLNMRAAQANGAESIGKELSKDALNNFINQHDMIHDAEVADSRPLPPLPVRAFNDSDSDEDYLLDDDDEDDTDEDEEYETINEHDADPVNGHVPATTQPHADDVNANNEKPAVPVDEQHKANGIDPIPGQLPASPENELKRRKRNEYQASLEQKVNDMKRKQRENEDKQLAAKKRRSLLTYIAAGVVVGVICAYAYTKLG.

Over 1 to 525 the chain is Cytoplasmic; sequence MSEQKTSGSG…KQLAAKKRRS (525 aa). Positions 33-296 constitute a Tyrosine-protein phosphatase domain; the sequence is FYKEICETCD…DFSYQAIIEG (264 aa). The tract at residues 46 to 65 is disordered; sequence KEKQFSTSESERHTNRGLNR. S83 carries the phosphoserine modification. The residue at position 86 (Y86) is a Phosphotyrosine. Substrate contacts are provided by residues D203, 237-243, and Q281; that span reads CSAGIGR. C237 acts as the Phosphocysteine intermediate in catalysis. 3 short sequence motifs (PXXP motif (SH3-binding)) span residues 327–330, 339–342, and 394–397; these read PPLP and PLAP. Residues 386–517 are disordered; the sequence is EVADSRPLPP…RKQRENEDKQ (132 aa). The span at 404–428 shows a compositional bias: acidic residues; sequence SDSDEDYLLDDDDEDDTDEDEEYET. 2 consecutive short sequence motifs (PXXP motif (SH3-binding)) follow at residues 459–462 and 480–483; these read PAVP and PASP. Basic and acidic residues predominate over residues 502 to 517; it reads KVNDMKRKQRENEDKQ. A helical transmembrane segment spans residues 526–545; the sequence is LLTYIAAGVVVGVICAYAYT. Residues 546–548 lie on the Extracellular side of the membrane; sequence KLG.

This sequence belongs to the protein-tyrosine phosphatase family. Non-receptor class 1 subfamily. In terms of assembly, interacts (via C-terminus) with dock/dreadlocks; this interaction is independent of insulin stimulation and is required for dephosphorylation of the insulin-like receptor InR.

It is found in the cytoplasm. It localises to the membrane. The protein localises to the endomembrane system. Its subcellular location is the nucleus. It catalyses the reaction O-phospho-L-tyrosyl-[protein] + H2O = L-tyrosyl-[protein] + phosphate. Its function is as follows. Non-receptor protein tyrosine phosphatase. Required for maintaining dock/dreadlocks in its non-phosphorylated state. Negative regulator of InR/insulin-like receptor signaling through dephosphorylation of tyrosines when recruited by dock/dreadlocks. The polypeptide is Tyrosine-protein phosphatase non-receptor type 61F (Drosophila melanogaster (Fruit fly)).